An 84-amino-acid chain; its full sequence is U2-theraphotoxin-Cg1b 2 (84 aa).

The N-terminal stretch at 1–21 (MKVSVLITLAVLGVMFLLTSA) is a signal peptide. Residues 22–48 (EERGSDQMDSPAWLKSMEIIFQSEERE) constitute a propeptide that is removed on maturation. Disulfide bonds link Cys-49/Cys-63, Cys-56/Cys-68, and Cys-62/Cys-76.

This sequence belongs to the neurotoxin 10 (Hwtx-1) family. 06 (F4b) subfamily. As to expression, expressed by the venom gland.

The protein localises to the secreted. Its function is as follows. Probable ion channel inhibitor. This Chilobrachys guangxiensis (Chinese earth tiger tarantula) protein is U2-theraphotoxin-Cg1b 2.